A 482-amino-acid polypeptide reads, in one-letter code: Nicotine dehydrogenase (482 aa).

The segment at residues 1 to 38 is a signal peptide (tat-type signal); that stretch reads MSDKTKTNEGFSRRSFIGSAAVVTAGVAGLGAIDAASA. The FAD site is built by alanine 64, glutamate 83, alanine 84, arginine 85, arginine 91, tryptophan 108, and valine 279. Position 381 (threonine 381) interacts with (S)-nicotine. 3 residues coordinate FAD: alanine 453, asparagine 462, and isoleucine 463.

The protein belongs to the flavin monoamine oxidase family. As to quaternary structure, monomer in solution. Homodimer in solution. Forms homodimers in the crystal. It depends on FAD as a cofactor. Post-translationally, predicted to be exported by the Tat system. The position of the signal peptide cleavage has not been experimentally proven.

The protein resides in the periplasm. It carries out the reaction (S)-nicotine + 2 Fe(III)-[cytochrome c] = N-methylmyosmine + 2 Fe(II)-[cytochrome c] + 2 H(+). It participates in alkaloid degradation; nicotine degradation. With respect to regulation, the catalytic rate is not significantly affected by pH. Involved in nicotine degradation. Catalyzes the conversion of nicotine to N-methylmyosmine. N-methylmyosmine undergoes spontaneous hydrolysis to form pseudooxynicotine (PN). S-nicotine is the optimal substrate. Has lower activity with some nicotine analogs, but shows no activity towards neurotransmitters, including serotonin, dopamine, and norepinephrine, nicotine metabolites and common neuroactive drugs. The enzyme is stereospecific with poor activity with (R)-nicotine as the substrate. The c-type cytochrome protein CycN is the physiological electron acceptor. O(2) is a poor electron acceptor. This is Nicotine dehydrogenase from Pseudomonas putida (strain DSM 28022 / S16).